We begin with the raw amino-acid sequence, 579 residues long: Methionine--tRNA ligase (579 aa).

The 'HIGH' region signature appears at 14–24; that stretch reads PYINGVKHLGN. Cys-146, Cys-149, Cys-159, and Cys-162 together coordinate Zn(2+). The 'KMSKS' region motif lies at 346–350; the sequence is KFSTS. Thr-349 is a binding site for ATP.

The protein belongs to the class-I aminoacyl-tRNA synthetase family. MetG type 1 subfamily. In terms of assembly, monomer. Zn(2+) serves as cofactor.

The protein localises to the cytoplasm. The enzyme catalyses tRNA(Met) + L-methionine + ATP = L-methionyl-tRNA(Met) + AMP + diphosphate. In terms of biological role, is required not only for elongation of protein synthesis but also for the initiation of all mRNA translation through initiator tRNA(fMet) aminoacylation. This chain is Methionine--tRNA ligase, found in Hyphomonas neptunium (strain ATCC 15444).